Reading from the N-terminus, the 251-residue chain is Carboxy-S-adenosyl-L-methionine synthase (251 aa).

Residues Tyr48, 73 to 75 (GCS), Asn140, and Arg207 each bind S-adenosyl-L-methionine.

The protein belongs to the class I-like SAM-binding methyltransferase superfamily. Cx-SAM synthase family. As to quaternary structure, homodimer.

It catalyses the reaction prephenate + S-adenosyl-L-methionine = carboxy-S-adenosyl-L-methionine + 3-phenylpyruvate + H2O. Catalyzes the conversion of S-adenosyl-L-methionine (SAM) to carboxy-S-adenosyl-L-methionine (Cx-SAM). This Hydrogenovibrio crunogenus (strain DSM 25203 / XCL-2) (Thiomicrospira crunogena) protein is Carboxy-S-adenosyl-L-methionine synthase.